Consider the following 162-residue polypeptide: MALFYLLAIAAALLDRVTKLLAIHYLRDGAQSIVIIPDWLKLTYAENLGIAFSVRFLPPTGLLFLTLAISAGVVWYVHKSNNRSPLFLTAFGLILGGGIGNLIDRVMLGHVVDFIYFDLYHGALFGIPLDLWPIFNVADSCITIGACMIVLFHEKIFTRKHA.

The next 2 membrane-spanning stretches (helical) occupy residues 56–76 (FLPP…VVWY) and 84–104 (SPLF…NLID). Catalysis depends on residues aspartate 113 and aspartate 139. Residues 132–152 (WPIFNVADSCITIGACMIVLF) form a helical membrane-spanning segment.

Belongs to the peptidase A8 family.

The protein localises to the cell inner membrane. It carries out the reaction Release of signal peptides from bacterial membrane prolipoproteins. Hydrolyzes -Xaa-Yaa-Zaa-|-(S,diacylglyceryl)Cys-, in which Xaa is hydrophobic (preferably Leu), and Yaa (Ala or Ser) and Zaa (Gly or Ala) have small, neutral side chains.. It functions in the pathway protein modification; lipoprotein biosynthesis (signal peptide cleavage). Functionally, this protein specifically catalyzes the removal of signal peptides from prolipoproteins. This Chlorobaculum tepidum (strain ATCC 49652 / DSM 12025 / NBRC 103806 / TLS) (Chlorobium tepidum) protein is Lipoprotein signal peptidase.